The following is a 673-amino-acid chain: NACHT, LRR and PYD domains-containing protein 10 (673 aa).

Residues Met1–Asn92 enclose the Pyrin domain. An NACHT domain is found at Pro163 to Gln469. Residue Gly169–Thr176 participates in ATP binding. The segment at Ser578–Gly673 is disordered. Low complexity predominate over residues Val584–Ser597. Residues Ala633 to Gly648 show a composition bias toward basic and acidic residues. The segment covering Gly649–Gly658 has biased composition (acidic residues). The span at Gln659–Gly673 shows a compositional bias: basic and acidic residues.

Belongs to the NLRP family. In terms of assembly, oligomerizes. Interacts with PYCARD. Also interacts with CASP1 and IL1B. Interacts with NOD1 and components of the NOD1 signaling pathway including RIPK2, NR2C2/TAK1 and IKBKG/NEMO. Expressed in skin, tongue, heart, colon and several cell lines of hematopoietic and myocytic origin but not in kidney, skeletal muscle, spleen, liver, lung, thymus, brain or small intestine (at protein level).

It localises to the cytoplasm. The protein localises to the cell membrane. Functionally, inhibits autoprocessing of CASP1, CASP1-dependent IL1B secretion, PYCARD aggregation and PYCARD-mediated apoptosis but not apoptosis induced by FAS or BID. Displays anti-inflammatory activity. Required for immunity against C.albicans infection. Involved in the innate immune response by contributing to pro-inflammatory cytokine release in response to invasive bacterial infection. Contributes to T-cell-mediated inflammatory responses in the skin. Plays a role in protection against periodontitis through its involvement in induction of IL1A via ERK activation in oral epithelial cells infected with periodontal pathogens. Exhibits both ATPase and GTPase activities. The protein is NACHT, LRR and PYD domains-containing protein 10 (Nlrp10) of Mus musculus (Mouse).